Here is a 93-residue protein sequence, read N- to C-terminus: Small ribosomal subunit protein uS19 (93 aa).

This sequence belongs to the universal ribosomal protein uS19 family.

Protein S19 forms a complex with S13 that binds strongly to the 16S ribosomal RNA. The chain is Small ribosomal subunit protein uS19 from Oenococcus oeni (strain ATCC BAA-331 / PSU-1).